The chain runs to 135 residues: Ribosome-binding factor A (135 aa).

This sequence belongs to the RbfA family. Monomer. Binds 30S ribosomal subunits, but not 50S ribosomal subunits or 70S ribosomes.

It localises to the cytoplasm. In terms of biological role, one of several proteins that assist in the late maturation steps of the functional core of the 30S ribosomal subunit. Associates with free 30S ribosomal subunits (but not with 30S subunits that are part of 70S ribosomes or polysomes). Required for efficient processing of 16S rRNA. May interact with the 5'-terminal helix region of 16S rRNA. The chain is Ribosome-binding factor A from Bartonella tribocorum (strain CIP 105476 / IBS 506).